The primary structure comprises 315 residues: L-lactate dehydrogenase (315 aa).

Residues V17, D38, K43, Y69, and 83 to 84 (GA) contribute to the NAD(+) site. Substrate contacts are provided by residues Q86, R92, and 124–127 (NPVD). NAD(+) is bound by residues 122-124 (ATN) and S147. 152–155 (DTAR) is a substrate binding site. R157 and H172 together coordinate beta-D-fructose 1,6-bisphosphate. The active-site Proton acceptor is H179. Y224 carries the phosphotyrosine modification. T233 lines the substrate pocket.

It belongs to the LDH/MDH superfamily. LDH family. As to quaternary structure, homotetramer.

The protein localises to the cytoplasm. It carries out the reaction (S)-lactate + NAD(+) = pyruvate + NADH + H(+). It participates in fermentation; pyruvate fermentation to lactate; (S)-lactate from pyruvate: step 1/1. With respect to regulation, allosterically activated by fructose 1,6-bisphosphate (FBP). Functionally, catalyzes the conversion of lactate to pyruvate. The protein is L-lactate dehydrogenase of Bacillus pumilus (strain SAFR-032).